We begin with the raw amino-acid sequence, 1020 residues long: Calcium-transporting ATPase 10, plasma membrane-type (1020 aa).

Residues 1–175 (MESYLEENFG…FVWEALQDTT (175 aa)) lie on the Cytoplasmic side of the membrane. The tract at residues 21 to 32 (ALRRWRKLCGVV) is interaction with calmodulin. 2 helical membrane-spanning segments follow: residues 176-196 (LIIL…MEGW) and 199-219 (GAHD…VTAT). Residues 220–263 (SDYRQSLQFKDLDKEKKKIQVQVTRNGFRQRLSIYDLLPGDVVH) lie on the Cytoplasmic side of the membrane. The next 2 helical transmembrane spans lie at 264 to 284 (LAIG…SLLI) and 352 to 372 (GVAT…FIVL). At 373 to 400 (SQGLISKKYHEGLLLSWSGDDALEMLEH) the chain is on the cytoplasmic side. A helical membrane pass occupies residues 401-421 (FAIAVTIVVVAVPEGLPLAVT). The 4-aspartylphosphate intermediate role is filled by Asp-456. Positions 758 and 762 each coordinate Mg(2+). Residues 843–863 (LTAVQLLWVNMIMDTLGALAL) form a helical membrane-spanning segment. At 864–887 (ATEPPNDDLMKREPVGRTGKFITN) the chain is on the cytoplasmic side. 2 consecutive transmembrane segments (helical) span residues 888–907 (VMWR…MWYL) and 924–944 (VVLN…NEIS). Residues 945–961 (SREMEKINVLRGILKNY) lie on the Cytoplasmic side of the membrane. 2 helical membrane passes run 962-982 (VFLG…QFLG) and 995-1015 (WIAS…IKLL). The Cytoplasmic segment spans residues 1016 to 1020 (PVGSS).

It belongs to the cation transport ATPase (P-type) (TC 3.A.3) family. Type IIB subfamily.

It localises to the membrane. It carries out the reaction Ca(2+)(in) + ATP + H2O = Ca(2+)(out) + ADP + phosphate + H(+). Its activity is regulated as follows. Activated by calmodulin. This magnesium-dependent enzyme catalyzes the hydrolysis of ATP coupled with the translocation of calcium from the cytosol out of the cell, into the endoplasmic reticulum, or into organelles. This chain is Calcium-transporting ATPase 10, plasma membrane-type, found in Oryza sativa subsp. japonica (Rice).